Here is a 964-residue protein sequence, read N- to C-terminus: Translation initiation factor IF-2 (964 aa).

Residues Ala35 to Met353 are disordered. The span at Lys64–Thr108 shows a compositional bias: low complexity. The segment covering Pro124–Ala133 has biased composition (pro residues). Basic and acidic residues predominate over residues Ala145 to Thr155. Residues Asn166 to Lys178 are compositionally biased toward pro residues. The segment covering Pro220–Asp233 has biased composition (low complexity). 2 stretches are compositionally biased toward gly residues: residues Gly234 to Pro252 and Gly290 to Gly333. The segment covering Arg337–Lys346 has biased composition (basic residues). Residues Lys459 to Asp631 form the tr-type G domain. Positions Gly468–Thr475 are G1. Position 468–475 (Gly468–Thr475) interacts with GTP. The segment at Gly493–Gly497 is G2. The tract at residues Asp518–Gly521 is G3. GTP-binding positions include Asp518–His522 and Asn572–Asp575. The segment at Asn572 to Asp575 is G4. The interval Ser608–Lys610 is G5.

Belongs to the TRAFAC class translation factor GTPase superfamily. Classic translation factor GTPase family. IF-2 subfamily.

It is found in the cytoplasm. Its function is as follows. One of the essential components for the initiation of protein synthesis. Protects formylmethionyl-tRNA from spontaneous hydrolysis and promotes its binding to the 30S ribosomal subunits. Also involved in the hydrolysis of GTP during the formation of the 70S ribosomal complex. This chain is Translation initiation factor IF-2, found in Corynebacterium efficiens (strain DSM 44549 / YS-314 / AJ 12310 / JCM 11189 / NBRC 100395).